A 380-amino-acid polypeptide reads, in one-letter code: Alcohol dehydrogenase (380 aa).

Zn(2+) is bound by residues C48, T50, H70, C100, C103, C106, C114, and C178. The an alcohol site is built by T50 and H70. T50 contacts NAD(+). Residues 203–208 (GLGAVG), D227, R232, T273, V296, 296–298 (VGV), F323, and R373 contribute to the NAD(+) site.

This sequence belongs to the zinc-containing alcohol dehydrogenase family. As to quaternary structure, homodimer. Zn(2+) is required as a cofactor.

It is found in the cytoplasm. The enzyme catalyses a primary alcohol + NAD(+) = an aldehyde + NADH + H(+). The catalysed reaction is a secondary alcohol + NAD(+) = a ketone + NADH + H(+). The polypeptide is Alcohol dehydrogenase (ADH) (Malus domestica (Apple)).